The following is a 226-amino-acid chain: Ribose-5-phosphate isomerase A (226 aa).

Residues threonine 28 to threonine 31, aspartate 84 to aspartate 87, and lysine 97 to glycine 100 contribute to the substrate site. Glutamate 106 functions as the Proton acceptor in the catalytic mechanism. Lysine 124 contributes to the substrate binding site.

This sequence belongs to the ribose 5-phosphate isomerase family. As to quaternary structure, homodimer.

It catalyses the reaction aldehydo-D-ribose 5-phosphate = D-ribulose 5-phosphate. It participates in carbohydrate degradation; pentose phosphate pathway; D-ribose 5-phosphate from D-ribulose 5-phosphate (non-oxidative stage): step 1/1. Its function is as follows. Catalyzes the reversible conversion of ribose-5-phosphate to ribulose 5-phosphate. The polypeptide is Ribose-5-phosphate isomerase A (Deinococcus radiodurans (strain ATCC 13939 / DSM 20539 / JCM 16871 / CCUG 27074 / LMG 4051 / NBRC 15346 / NCIMB 9279 / VKM B-1422 / R1)).